The sequence spans 380 residues: Probable transposase for insertion sequence element IS701 (380 aa).

In terms of biological role, involved in the transposition of the insertion sequence. This Microchaete diplosiphon (Fremyella diplosiphon) protein is Probable transposase for insertion sequence element IS701.